Consider the following 295-residue polypeptide: Ribosomal RNA small subunit methyltransferase A (295 aa).

Residues N29, L31, G56, E77, D102, and N127 each contribute to the S-adenosyl-L-methionine site.

This sequence belongs to the class I-like SAM-binding methyltransferase superfamily. rRNA adenine N(6)-methyltransferase family. RsmA subfamily.

The protein resides in the cytoplasm. The enzyme catalyses adenosine(1518)/adenosine(1519) in 16S rRNA + 4 S-adenosyl-L-methionine = N(6)-dimethyladenosine(1518)/N(6)-dimethyladenosine(1519) in 16S rRNA + 4 S-adenosyl-L-homocysteine + 4 H(+). Functionally, specifically dimethylates two adjacent adenosines (A1518 and A1519) in the loop of a conserved hairpin near the 3'-end of 16S rRNA in the 30S particle. May play a critical role in biogenesis of 30S subunits. The protein is Ribosomal RNA small subunit methyltransferase A of Anoxybacillus flavithermus (strain DSM 21510 / WK1).